The chain runs to 101 residues: Small ribosomal subunit protein uS14 (101 aa).

Belongs to the universal ribosomal protein uS14 family. Part of the 30S ribosomal subunit. Contacts proteins S3 and S10.

Its function is as follows. Binds 16S rRNA, required for the assembly of 30S particles and may also be responsible for determining the conformation of the 16S rRNA at the A site. This chain is Small ribosomal subunit protein uS14, found in Aliivibrio fischeri (strain MJ11) (Vibrio fischeri).